The primary structure comprises 255 residues: Glutamate racemase (255 aa).

Residues 7-8 (DS) and 39-40 (YG) each bind substrate. C70 serves as the catalytic Proton donor/acceptor. 71–72 (NT) provides a ligand contact to substrate. C181 (proton donor/acceptor) is an active-site residue. 182–183 (TH) contacts substrate.

This sequence belongs to the aspartate/glutamate racemases family.

It carries out the reaction L-glutamate = D-glutamate. The protein operates within cell wall biogenesis; peptidoglycan biosynthesis. Functionally, provides the (R)-glutamate required for cell wall biosynthesis. The sequence is that of Glutamate racemase from Helicobacter pylori (strain P12).